Reading from the N-terminus, the 132-residue chain is ATP synthase epsilon chain (132 aa).

It belongs to the ATPase epsilon chain family. As to quaternary structure, F-type ATPases have 2 components, CF(1) - the catalytic core - and CF(0) - the membrane proton channel. CF(1) has five subunits: alpha(3), beta(3), gamma(1), delta(1), epsilon(1). CF(0) has three main subunits: a, b and c.

The protein localises to the cell inner membrane. In terms of biological role, produces ATP from ADP in the presence of a proton gradient across the membrane. In Cereibacter sphaeroides (strain ATCC 17025 / ATH 2.4.3) (Rhodobacter sphaeroides), this protein is ATP synthase epsilon chain.